A 137-amino-acid chain; its full sequence is ATP synthase epsilon chain (137 aa).

The protein belongs to the ATPase epsilon chain family. In terms of assembly, F-type ATPases have 2 components, CF(1) - the catalytic core - and CF(0) - the membrane proton channel. CF(1) has five subunits: alpha(3), beta(3), gamma(1), delta(1), epsilon(1). CF(0) has three main subunits: a, b and c.

The protein resides in the cellular thylakoid membrane. Its function is as follows. Produces ATP from ADP in the presence of a proton gradient across the membrane. The sequence is that of ATP synthase epsilon chain (atpC) from Synechococcus elongatus (strain ATCC 33912 / PCC 7942 / FACHB-805) (Anacystis nidulans R2).